The following is a 169-amino-acid chain: MICOS complex subunit MIC19 (169 aa).

Gly-2 is lipidated: N-myristoyl glycine. A CHCH domain is found at 123–165; it reads ENVCQDNENEIVRCLQENPGRVLKCAPLTEAFEKCVGEFRQQV. Short sequence motifs (cx9C motif) lie at residues 126–136 and 147–157; these read CQDNENEIVRC and CAPLTEAFEKC. Intrachain disulfides connect Cys-126–Cys-157 and Cys-136–Cys-147.

This sequence belongs to the MICOS complex subunit Mic19 family. Metazoan Mic19 subfamily. In terms of assembly, component of the mitochondrial contact site and cristae organizing system (MICOS) complex.

Its subcellular location is the mitochondrion inner membrane. Functionally, plays a role in maintaining mitochondrial morphology. May act as a component of the MICOS complex, a large protein complex of the mitochondria. In Caenorhabditis elegans, this protein is MICOS complex subunit MIC19.